The primary structure comprises 746 residues: MEHTYQYSWIIPFIPLPVPILLGVGLLLFPTATKNLRRMWTFLSIFLLSIVMIFSLYLSIQQIFVSCIHQNVWSWTINNEFSFEFGYFIDPLTSIMSILISTVGILVLIYSDNYMSHDQGYLRFFAYMGFFNTSMLGLVTSSNLIQVYFFWELVGMCSYLLIGFWFTRPIAANACQKAFVTNRVGDFGLLLGILGLYWITGSFEFQDLFEIFNNLILNNRVNLLFLTLCAFLLFVGPIAKSAQFPLHVWLPDAMEGPTPISALIHAATMVAAGIFLVARLLPLFIVIPSIMYIISLIGIITVLLGATLALAQKDIKRGLAYSTMSQLGYMMLALGMGSYRSALFHLITHAYSKALLFLGSGSIIHSMEAIVGYSPDKSQNMILMGGLTKHVPITKTAFLIGTLSLCGIPPLACFWSKDEILNDSLLFSPIFAIIACSTAGLTAFYMFRIYLLTFEGHLNTYFINYSGKKSSSFYSISLWGKEEEKKLNRNFGLVPLLTMNNTKRASFFCKKTYKISNNVRNQTFITVENFGLNTRTFYYPHESDNTILFPMLVLLLFTLFIGAIGIPFNQEGIDFDILSKLFTPSINLLHQNSENLVDWYEFFRNATFSVSIAFFGIFIAYCLYKPFYSSLLNLTLLNLFQKWNSKRIRWEKLINFVYNWSYNRGYIDAFFKTALIESIRRLAKQTNFFDKRIIDGITNGVGITSFFVGEVTKYIGGSRISSYLFLYLSYVLIFLIILFFFYFEKF.

Helical transmembrane passes span 9–29 (WIIP…LLLF), 40–60 (WTFL…YLSI), 89–109 (IDPL…LVLI), 125–145 (FAYM…SNLI), 147–167 (VYFF…FWFT), 185–205 (GDFG…SFEF), 221–241 (VNLL…IAKS), 258–278 (TPIS…FLVA), 280–300 (LLPL…IGII), 327–347 (LGYM…FHLI), 354–374 (ALLF…VGYS), 396–416 (TAFL…CFWS), 425–445 (LLFS…TAFY), 547–567 (ILFP…IGIP), 608–628 (FSVS…KPFY), and 723–743 (YLFL…FFYF).

It belongs to the complex I subunit 5 family. In terms of assembly, NDH is composed of at least 16 different subunits, 5 of which are encoded in the nucleus.

The protein resides in the plastid. It localises to the chloroplast thylakoid membrane. It catalyses the reaction a plastoquinone + NADH + (n+1) H(+)(in) = a plastoquinol + NAD(+) + n H(+)(out). The catalysed reaction is a plastoquinone + NADPH + (n+1) H(+)(in) = a plastoquinol + NADP(+) + n H(+)(out). NDH shuttles electrons from NAD(P)H:plastoquinone, via FMN and iron-sulfur (Fe-S) centers, to quinones in the photosynthetic chain and possibly in a chloroplast respiratory chain. The immediate electron acceptor for the enzyme in this species is believed to be plastoquinone. Couples the redox reaction to proton translocation, and thus conserves the redox energy in a proton gradient. This is NAD(P)H-quinone oxidoreductase subunit 5, chloroplastic (ndhF) from Lepidium virginicum (Virginia pepperweed).